Reading from the N-terminus, the 116-residue chain is Large ribosomal subunit protein bL20 (116 aa).

It belongs to the bacterial ribosomal protein bL20 family.

Functionally, binds directly to 23S ribosomal RNA and is necessary for the in vitro assembly process of the 50S ribosomal subunit. It is not involved in the protein synthesizing functions of that subunit. The polypeptide is Large ribosomal subunit protein bL20 (Desulforapulum autotrophicum (strain ATCC 43914 / DSM 3382 / VKM B-1955 / HRM2) (Desulfobacterium autotrophicum)).